A 369-amino-acid polypeptide reads, in one-letter code: tRNA-specific 2-thiouridylase MnmA (369 aa).

ATP is bound by residues 12–19 (GMSGGVDS) and Met38. The interval 98–100 (NPD) is interaction with target base in tRNA. Cys103 serves as the catalytic Nucleophile. A disulfide bond links Cys103 and Cys200. ATP is bound at residue Gly128. The interval 150 to 152 (KDQ) is interaction with tRNA. Cys200 acts as the Cysteine persulfide intermediate in catalysis. Residues 312 to 313 (RY) are interaction with tRNA.

Belongs to the MnmA/TRMU family. In terms of assembly, interacts with TusE.

The protein resides in the cytoplasm. The enzyme catalyses S-sulfanyl-L-cysteinyl-[protein] + uridine(34) in tRNA + AH2 + ATP = 2-thiouridine(34) in tRNA + L-cysteinyl-[protein] + A + AMP + diphosphate + H(+). Catalyzes the 2-thiolation of uridine at the wobble position (U34) of tRNA(Lys), tRNA(Glu) and tRNA(Gln), leading to the formation of s(2)U34, the first step of tRNA-mnm(5)s(2)U34 synthesis. Sulfur is provided by IscS, via a sulfur-relay system. Binds ATP and its substrate tRNAs. The polypeptide is tRNA-specific 2-thiouridylase MnmA (Sodalis glossinidius (strain morsitans)).